The primary structure comprises 502 residues: Probable cytosol aminopeptidase (502 aa).

Mn(2+)-binding residues include Lys-258 and Asp-263. Lys-270 is a catalytic residue. Residues Asp-281, Asp-340, and Glu-342 each coordinate Mn(2+). Residue Arg-344 is part of the active site.

The protein belongs to the peptidase M17 family. It depends on Mn(2+) as a cofactor.

It localises to the cytoplasm. It carries out the reaction Release of an N-terminal amino acid, Xaa-|-Yaa-, in which Xaa is preferably Leu, but may be other amino acids including Pro although not Arg or Lys, and Yaa may be Pro. Amino acid amides and methyl esters are also readily hydrolyzed, but rates on arylamides are exceedingly low.. The enzyme catalyses Release of an N-terminal amino acid, preferentially leucine, but not glutamic or aspartic acids.. Presumably involved in the processing and regular turnover of intracellular proteins. Catalyzes the removal of unsubstituted N-terminal amino acids from various peptides. The chain is Probable cytosol aminopeptidase from Clavibacter michiganensis subsp. michiganensis (strain NCPPB 382).